The sequence spans 414 residues: Glucose-1-phosphate adenylyltransferase (414 aa).

Residues Y99, G164, 181-182, and S199 each bind alpha-D-glucose 1-phosphate; that span reads EK.

It belongs to the bacterial/plant glucose-1-phosphate adenylyltransferase family. Homotetramer.

It carries out the reaction alpha-D-glucose 1-phosphate + ATP + H(+) = ADP-alpha-D-glucose + diphosphate. It functions in the pathway glycan biosynthesis; glycogen biosynthesis. Involved in the biosynthesis of ADP-glucose, a building block required for the elongation reactions to produce glycogen. Catalyzes the reaction between ATP and alpha-D-glucose 1-phosphate (G1P) to produce pyrophosphate and ADP-Glc. This is Glucose-1-phosphate adenylyltransferase from Bifidobacterium longum (strain DJO10A).